We begin with the raw amino-acid sequence, 498 residues long: Probable malate:quinone oxidoreductase 2 (498 aa).

This sequence belongs to the MQO family. FAD serves as cofactor.

The enzyme catalyses (S)-malate + a quinone = a quinol + oxaloacetate. The protein operates within carbohydrate metabolism; tricarboxylic acid cycle; oxaloacetate from (S)-malate (quinone route): step 1/1. This is Probable malate:quinone oxidoreductase 2 from Staphylococcus epidermidis (strain ATCC 12228 / FDA PCI 1200).